Reading from the N-terminus, the 74-residue chain is Cytochrome c oxidase assembly factor 5 (74 aa).

The CHCH domain maps to Gln-27–Arg-65. A Cx10C motif motif is present at residues Cys-30–Cys-41. 2 disulfides stabilise this stretch: Cys-30/Cys-57 and Cys-41/Cys-47. The residue at position 37 (Ser-37) is a Phosphoserine. The Cx9C motif motif lies at Cys-47–Cys-57.

The protein belongs to the PET191 family.

In terms of biological role, involved in an early step of the mitochondrial complex IV assembly process. In Homo sapiens (Human), this protein is Cytochrome c oxidase assembly factor 5 (COA5).